The sequence spans 620 residues: Chaperone protein HscA homolog (620 aa).

It belongs to the heat shock protein 70 family.

In terms of biological role, chaperone involved in the maturation of iron-sulfur cluster-containing proteins. Has a low intrinsic ATPase activity which is markedly stimulated by HscB. The protein is Chaperone protein HscA homolog of Shewanella piezotolerans (strain WP3 / JCM 13877).